The sequence spans 295 residues: UDP-N-acetylenolpyruvoylglucosamine reductase (295 aa).

In terms of domain architecture, FAD-binding PCMH-type spans 23-188 (KVGGPADFLA…ISAKFALKPG (166 aa)). Arg-167 is an active-site residue. The active-site Proton donor is the Ser-217. Glu-287 is an active-site residue.

The protein belongs to the MurB family. It depends on FAD as a cofactor.

It localises to the cytoplasm. The enzyme catalyses UDP-N-acetyl-alpha-D-muramate + NADP(+) = UDP-N-acetyl-3-O-(1-carboxyvinyl)-alpha-D-glucosamine + NADPH + H(+). The protein operates within cell wall biogenesis; peptidoglycan biosynthesis. In terms of biological role, cell wall formation. This is UDP-N-acetylenolpyruvoylglucosamine reductase from Streptococcus pyogenes serotype M6 (strain ATCC BAA-946 / MGAS10394).